A 135-amino-acid polypeptide reads, in one-letter code: Large ribosomal subunit protein uL16 (135 aa).

It belongs to the universal ribosomal protein uL16 family. Part of the 50S ribosomal subunit.

Functionally, binds 23S rRNA and is also seen to make contacts with the A and possibly P site tRNAs. The chain is Large ribosomal subunit protein uL16 from Desulfatibacillum aliphaticivorans.